Consider the following 341-residue polypeptide: Methionine import ATP-binding protein MetN 2 (341 aa).

The 240-residue stretch at 2-241 folds into the ABC transporter domain; that stretch reads INLQNVSKIY…PKEEMTKRFV (240 aa). 38–45 is a binding site for ATP; sequence GYSGAGKS.

Belongs to the ABC transporter superfamily. Methionine importer (TC 3.A.1.24) family. As to quaternary structure, the complex is composed of two ATP-binding proteins (MetN), two transmembrane proteins (MetI) and a solute-binding protein (MetQ).

The protein resides in the cell membrane. It carries out the reaction L-methionine(out) + ATP + H2O = L-methionine(in) + ADP + phosphate + H(+). It catalyses the reaction D-methionine(out) + ATP + H2O = D-methionine(in) + ADP + phosphate + H(+). Its function is as follows. Part of the ABC transporter complex MetNIQ involved in methionine import. Responsible for energy coupling to the transport system. This Bacillus licheniformis (strain ATCC 14580 / DSM 13 / JCM 2505 / CCUG 7422 / NBRC 12200 / NCIMB 9375 / NCTC 10341 / NRRL NRS-1264 / Gibson 46) protein is Methionine import ATP-binding protein MetN 2.